Here is a 294-residue protein sequence, read N- to C-terminus: Lysozyme M1 (294 aa).

Residues glycine 81–alanine 294 enclose the Ch-type lysozyme domain. Catalysis depends on residues aspartate 86, aspartate 175, and glutamate 177. A disulfide bridge connects residues cysteine 185 and cysteine 224.

Belongs to the glycosyl hydrolase 25 family.

It is found in the secreted. The enzyme catalyses Hydrolysis of (1-&gt;4)-beta-linkages between N-acetylmuramic acid and N-acetyl-D-glucosamine residues in a peptidoglycan and between N-acetyl-D-glucosamine residues in chitodextrins.. Functionally, this enzyme has both lysozyme (acetylmuramidase) and diacetylmuramidase activities. This chain is Lysozyme M1 (acm), found in Streptomyces globisporus.